Consider the following 166-residue polypeptide: Packaging efficiency factor P6 (166 aa).

The disordered stretch occupies residues 134–166 (ILPESAGDQQEAEPVPSVGDQQETAPRKRFRAI).

In terms of assembly, heterodimer of P6 and P9; further multimerizes as hexamers of heterodimers. Part of the dodecameric portal complex that is composed of the packaging efficiency factor P6, the DNA packaging ATPase P9, and the internal heterododecamer P20/P22 which spans the virion inner membrane.

Its subcellular location is the virion. Its function is as follows. Together with the packaging ATPase P9, forms the external part of the portal vertex that is embeded in the capsid and which plays critical roles in genome packaging and genome ejection. Both proteins multimerize as a single ring-shaped heterdodecamer arranged around a central channel. The chain is Packaging efficiency factor P6 (VI) from Acinetobacter calcoaceticus (Arthrobacter siderocapsulatus).